The sequence spans 163 residues: MASKMSLRYSLFLIFFSLISLQGFAKKTGDVSELQIGVKFKPKTCEVQAHKGDTIKVHYRGKLTDGTVFDSSFERGDPFEFKLGSGQVIKGWDQGLLGACVGEKRKLKIPAKLGYGEQGSPPTIPGGATLIFDTELIAVNEKPAGGEEYGGDEDDEGYGNDEL.

An N-terminal signal peptide occupies residues 1–25 (MASKMSLRYSLFLIFFSLISLQGFA). Residues 52–140 (GDTIKVHYRG…IFDTELIAVN (89 aa)) enclose the PPIase FKBP-type domain. Positions 142–163 (KPAGGEEYGGDEDDEGYGNDEL) are disordered. The segment covering 149 to 163 (YGGDEDDEGYGNDEL) has biased composition (acidic residues). A Prevents secretion from ER motif is present at residues 160–163 (NDEL).

Belongs to the FKBP-type PPIase family.

Its subcellular location is the endoplasmic reticulum lumen. The catalysed reaction is [protein]-peptidylproline (omega=180) = [protein]-peptidylproline (omega=0). PPIases accelerate the folding of proteins. It catalyzes the cis-trans isomerization of proline imidic peptide bonds in oligopeptides. This Arabidopsis thaliana (Mouse-ear cress) protein is Peptidyl-prolyl cis-trans isomerase FKBP15-2 (FKBP15-2).